We begin with the raw amino-acid sequence, 171 residues long: UPF0312 protein SAR2769 (171 aa).

This sequence belongs to the UPF0312 family.

The protein is UPF0312 protein SAR2769 of Staphylococcus aureus (strain MRSA252).